The chain runs to 931 residues: Protocadherin gamma-A5 (931 aa).

Residues 1–29 (MASPPRGWGCGELLLPFMLLGTLCEPGSG) form the signal peptide. Cadherin domains lie at 30–133 (QIRY…FPRF), 134–242 (RDEE…APLF), 243–347 (TPSE…APEV), 348–452 (ILTS…PPNF), 453–562 (PQAS…TPEI), and 570–683 (DGST…TPID). The Extracellular segment spans residues 30-692 (QIRYSMPEEL…DPEDLDLTLY (663 aa)). N-linked (GlcNAc...) asparagine glycans are attached at residues N419 and N545. Residues 693–713 (LVVAVAAVSCVFLAFVIVLLV) traverse the membrane as a helical segment. Residues 714–931 (LRLRRWHKSR…KKKSGKKEKK (218 aa)) lie on the Cytoplasmic side of the membrane. Disordered stretches follow at residues 800-840 (NKEE…WPNN) and 901-931 (ATLT…KEKK). Over residues 809–840 (APPNTDWRFSQAQRPGTSGSQNGDDTGTWPNN) the composition is skewed to polar residues. Residues 921–931 (NKKKSGKKEKK) show a composition bias toward basic residues.

Its subcellular location is the cell membrane. In terms of biological role, potential calcium-dependent cell-adhesion protein. May be involved in the establishment and maintenance of specific neuronal connections in the brain. This chain is Protocadherin gamma-A5 (PCDHGA5), found in Homo sapiens (Human).